The primary structure comprises 824 residues: AMP deaminase 2 (824 aa).

The disordered stretch occupies residues 1–43 (MASYPGPGKSKAKYPFKKRASLQASAAAPEARSGLGASPLQSA). Residues 10–20 (SKAKYPFKKRA) show a composition bias toward basic residues. Ser21 is modified (phosphoserine). Positions 21–33 (SLQASAAAPEARS) are enriched in low complexity. An Omega-N-methylarginine modification is found at Arg44. Phosphoserine occurs at positions 45, 63, and 79. At Tyr90 the chain carries Phosphotyrosine. Phosphoserine occurs at positions 96 and 113. Thr133 is modified (phosphothreonine). Phosphoserine occurs at positions 135 and 137. Zn(2+) contacts are provided by His364 and His366. Residues His366 and 435–440 (KFNAKY) each bind substrate. Position 633 (His633) interacts with Zn(2+). Residue Glu636 coordinates substrate. His655 serves as the catalytic Proton acceptor. Residue Asp710 coordinates Zn(2+). A substrate-binding site is contributed by 711 to 714 (DPLQ).

The protein belongs to the metallo-dependent hydrolases superfamily. Adenosine and AMP deaminases family. As to quaternary structure, homotetramer. The cofactor is Zn(2+).

It catalyses the reaction AMP + H2O + H(+) = IMP + NH4(+). The protein operates within purine metabolism; IMP biosynthesis via salvage pathway; IMP from AMP: step 1/1. Its function is as follows. AMP deaminase plays a critical role in energy metabolism. Catalyzes the deamination of AMP to IMP and plays an important role in the purine nucleotide cycle. This Rattus norvegicus (Rat) protein is AMP deaminase 2.